Reading from the N-terminus, the 114-residue chain is Helper of Tim protein 13 (114 aa).

The CHY-type; degenerate zinc finger occupies Leu10–Ser90. Cys17, His19, Cys40, Cys43, Cys67, Cys70, Cys85, and Cys88 together coordinate Zn(2+).

In terms of assembly, interacts with the small Tim proteins.

It is found in the mitochondrion intermembrane space. Its subcellular location is the mitochondrion membrane. Functionally, required for the assembly or recycling of the small Tim proteins in the mitochondrial intermembrane, thereby participating in the import and insertion of multi-pass transmembrane proteins into the mitochondrial inner membrane. The chain is Helper of Tim protein 13 (HOT13) from Kluyveromyces lactis (strain ATCC 8585 / CBS 2359 / DSM 70799 / NBRC 1267 / NRRL Y-1140 / WM37) (Yeast).